Consider the following 457-residue polypeptide: Prenyltransferase ucdE (457 aa).

Residues R106, K198, K277, Y279, Y382, Y447, and Y451 each contribute to the dimethylallyl diphosphate site.

The protein belongs to the tryptophan dimethylallyltransferase family.

Its pathway is secondary metabolite biosynthesis. Nonribosomal peptide synthetase that mediates the biosynthesis of usterphenyllins and uscandidusins, p-terphenyl derivatives. Within the pathway, ucdE prenylates position C-5 of ring A of 3,15-dihydroxyterphenyllin to produce forms usterphenyllin B. UcdE further prenylates position C-14 of ring C of usterphenyllin B to form usterphenyllin A. The pathway begin with the biosynthesis of 4-hydroxyphenylpyruvate (HPPA) from L-tyrosine, possibly by the aminotransferase ucdG. The nonribosomal peptide synthetase ucdA then condenses two HPPA units to produce atromentin. The key step in this pathway is the reduction and dehydration of atromentin to form a terphenyl triol intermediate, performed by the NAD-dependent dehydrogenase ucdB. Further O-methylation by the methyltransferase ucdC forms terphenyllin carrying two methoxy moieties at C-9 and C-12, and subsequent dihydroxylation at C-3 of ring A and C-15 of ring C by the flavin-dependent oxygenase ucdD leads to 3,15-dihydroxyterphenyllin. Prenylation by ucdE at position C-5 of ring A forms usterphenyllin B, and is followed by a second prenylation at position C-14 of ring C to form usterphenyllin A. The following furan ring formation that leads to uscandidusins A and B was proven to be an unexpected spontaneous non-enzymatic reaction. The polypeptide is Prenyltransferase ucdE (Aspergillus ustus).